The primary structure comprises 265 residues: Hydroxyethylthiazole kinase (265 aa).

Met55 provides a ligand contact to substrate. The ATP site is built by Arg130 and Ser176. Gly203 contributes to the substrate binding site.

The protein belongs to the Thz kinase family. Mg(2+) serves as cofactor.

It catalyses the reaction 5-(2-hydroxyethyl)-4-methylthiazole + ATP = 4-methyl-5-(2-phosphooxyethyl)-thiazole + ADP + H(+). It participates in cofactor biosynthesis; thiamine diphosphate biosynthesis; 4-methyl-5-(2-phosphoethyl)-thiazole from 5-(2-hydroxyethyl)-4-methylthiazole: step 1/1. In terms of biological role, catalyzes the phosphorylation of the hydroxyl group of 4-methyl-5-beta-hydroxyethylthiazole (THZ). This Leptospira interrogans serogroup Icterohaemorrhagiae serovar Lai (strain 56601) protein is Hydroxyethylthiazole kinase.